Reading from the N-terminus, the 382-residue chain is Serine/arginine-rich splicing factor SR45a (382 aa).

Composition is skewed to low complexity over residues Pro-30 to Pro-45, Val-54 to Ser-68, Pro-177 to Tyr-195, and Ser-202 to Phe-219. Disordered stretches follow at residues Pro-30–Ser-76 and Lys-150–Pro-382. Positions Arg-288–Tyr-316 are enriched in basic and acidic residues. Over residues Val-329 to Ser-343 the composition is skewed to low complexity. Residues Ser-345–Asp-361 show a composition bias toward basic residues. Residues Ser-364–Pro-382 are compositionally biased toward low complexity.

The protein belongs to the splicing factor SR family. SR45 subfamily. In terms of assembly, component of the spliceosome. Homodimer. Interacts with PRP38, SCL28, SR45, RNU1 and U2AF35B. Post-translationally, phosphorylated. As to expression, expressed in leaves, stems and roots.

Its subcellular location is the nucleus speckle. Probable splicing factor involved in constitutive and/or alternative splicing events. May bridge the 5' and 3' components of the spliceosome. This Arabidopsis thaliana (Mouse-ear cress) protein is Serine/arginine-rich splicing factor SR45a (SR45A).